Here is a 166-residue protein sequence, read N- to C-terminus: 2-amino-4-hydroxy-6-hydroxymethyldihydropteridine pyrophosphokinase (166 aa).

Belongs to the HPPK family.

The catalysed reaction is 6-hydroxymethyl-7,8-dihydropterin + ATP = (7,8-dihydropterin-6-yl)methyl diphosphate + AMP + H(+). It participates in cofactor biosynthesis; tetrahydrofolate biosynthesis; 2-amino-4-hydroxy-6-hydroxymethyl-7,8-dihydropteridine diphosphate from 7,8-dihydroneopterin triphosphate: step 4/4. Functionally, catalyzes the transfer of pyrophosphate from adenosine triphosphate (ATP) to 6-hydroxymethyl-7,8-dihydropterin, an enzymatic step in folate biosynthesis pathway. The protein is 2-amino-4-hydroxy-6-hydroxymethyldihydropteridine pyrophosphokinase (folK) of Streptococcus pyogenes serotype M6 (strain ATCC BAA-946 / MGAS10394).